Reading from the N-terminus, the 367-residue chain is Pre-small/secreted glycoprotein (367 aa).

The signal sequence occupies residues 1–33 (MGSGYQLLQLPRERFRKTSFLVWVIILFQRAIS). An N-linked (GlcNAc...) asparagine; by host glycan is attached at Asn41. 2 disulfide bridges follow: Cys109/Cys136 and Cys122/Cys148. Residues Asn205, Asn239, Asn258, and Asn269 are each glycosylated (N-linked (GlcNAc...) asparagine; by host).

It belongs to the filoviruses glycoprotein family. In terms of assembly, homodimer; disulfide-linked. The homodimers are linked by two disulfide bonds in a parallel orientation. As to quaternary structure, monomer. Post-translationally, this precursor is processed into mature sGP and delta-peptide by host furin or furin-like proteases. The cleavage site corresponds to the furin optimal cleavage sequence [KR]-X-[KR]-R. In terms of processing, N-glycosylated. O-glycosylated.

Its subcellular location is the secreted. Seems to possess an anti-inflammatory activity as it can reverse the barrier-decreasing effects of TNF alpha. Might therefore contribute to the lack of inflammatory reaction seen during infection in spite the of extensive necrosis and massive virus production. Does not seem to be involved in activation of primary macrophages. Does not seem to interact specifically with neutrophils. Functionally, viroporin that permeabilizes mammalian cell plasma membranes. It acts by altering permeation of ionic compounds and small molecules. This activity may lead to viral enterotoxic activity. The protein is Pre-small/secreted glycoprotein (GP) of Reston ebolavirus (strain Philippines-96) (REBOV).